The primary structure comprises 198 residues: Putative coiled-coil domain-containing protein 196 (198 aa).

A coiled-coil region spans residues 24 to 117; the sequence is NYLKELNEDL…RKEMEMLWNK (94 aa). Basic and acidic residues-rich tracts occupy residues 135-144 and 154-167; these read NKTDLQDGKA and TKNELETLCAEKGK. Residues 135–198 form a disordered region; it reads NKTDLQDGKA…VSGTSQHHSE (64 aa). Over residues 187 to 198 the composition is skewed to polar residues; sequence GQVSGTSQHHSE.

This is Putative coiled-coil domain-containing protein 196 from Bos taurus (Bovine).